A 469-amino-acid polypeptide reads, in one-letter code: Proline--tRNA ligase (469 aa).

The protein belongs to the class-II aminoacyl-tRNA synthetase family. ProS type 3 subfamily. As to quaternary structure, homodimer.

The protein resides in the cytoplasm. It catalyses the reaction tRNA(Pro) + L-proline + ATP = L-prolyl-tRNA(Pro) + AMP + diphosphate. Functionally, catalyzes the attachment of proline to tRNA(Pro) in a two-step reaction: proline is first activated by ATP to form Pro-AMP and then transferred to the acceptor end of tRNA(Pro). This chain is Proline--tRNA ligase, found in Methanobrevibacter smithii (strain ATCC 35061 / DSM 861 / OCM 144 / PS).